A 795-amino-acid chain; its full sequence is Oleate activated transcription factor 3 (795 aa).

The segment at residues 14–43 is a DNA-binding region (zn(2)-C6 fungal-type); it reads CSNCKRRKSRCDRGKPACGNCIRLGNRETC.

This sequence belongs to the OAF3 family.

It is found in the cytoplasm. The protein localises to the nucleus. It localises to the mitochondrion. Functionally, transcriptional inhibitor with a significantly increased number of target genes in response to oleate. This Eremothecium gossypii (strain ATCC 10895 / CBS 109.51 / FGSC 9923 / NRRL Y-1056) (Yeast) protein is Oleate activated transcription factor 3 (OAF3).